Here is a 637-residue protein sequence, read N- to C-terminus: Threonine--tRNA ligase (637 aa).

Positions 1 to 61 (MIKITLKDGK…NEDSTLEILT (61 aa)) constitute a TGS domain. The tract at residues 242–532 (DHRKLGKELG…LTEHYAGAFP (291 aa)) is catalytic. Residues C333, H384, and H509 each coordinate Zn(2+).

This sequence belongs to the class-II aminoacyl-tRNA synthetase family. Homodimer. Zn(2+) serves as cofactor.

It is found in the cytoplasm. It catalyses the reaction tRNA(Thr) + L-threonine + ATP = L-threonyl-tRNA(Thr) + AMP + diphosphate + H(+). Catalyzes the attachment of threonine to tRNA(Thr) in a two-step reaction: L-threonine is first activated by ATP to form Thr-AMP and then transferred to the acceptor end of tRNA(Thr). Also edits incorrectly charged L-seryl-tRNA(Thr). The polypeptide is Threonine--tRNA ligase (Clostridium novyi (strain NT)).